We begin with the raw amino-acid sequence, 287 residues long: Type 1 encapsulin shell protein EncA (287 aa).

This sequence belongs to the encapsulin family. Family 1 subfamily. As to quaternary structure, the 32 nm encapsulin nanocompartment is formed by 180 subunits; monomers form pentamers which assemble to form shells. There are 36 pores where the pentamers meet as well as 3-fold axis channels and dimer channels. The N-terminus of the protein is inside the shell.

Its subcellular location is the encapsulin nanocompartment. Its function is as follows. Shell component of a type 1, iron-storage encapsulin nanocompartment. Encapsulin nanocompartments are 32 nm in diameter with an iron- and phosphorus-rich core (4Fe:1P) about 24 nm in diameter. Upon expression in E.coli most particles are 32 nm, 20% are 18 nm. The core is filled with an average of 14 dense granules, 5-6 nm in diameter that are not evenly distributed. Each nanocompartment is estimated to hold 30,000-35,000 Fe atoms. The minor proteins EncB, EncC and EncD probably lie against the interior face of the nanocompartment. The chain is Type 1 encapsulin shell protein EncA from Myxococcus xanthus (strain DK1622).